The following is a 62-amino-acid chain: U8-theraphotoxin-Cg1a 1 (62 aa).

Positions 1–21 (MKTLVLFIIFGLAALFLLSSA) are cleaved as a signal peptide. Residues 22 to 29 (NELEETER) constitute a propeptide that is removed on maturation. Cystine bridges form between Cys31-Cys46, Cys38-Cys51, and Cys45-Cys58.

This sequence belongs to the neurotoxin 10 (Hwtx-1) family. 30 (Jztx-14) subfamily. Expressed by the venom gland.

Its subcellular location is the secreted. Probable ion channel inhibitor. The protein is U8-theraphotoxin-Cg1a 1 of Chilobrachys guangxiensis (Chinese earth tiger tarantula).